The following is a 1687-amino-acid chain: Genome polyprotein (1687 aa).

Residues 1–13 (MRMATPSSAPSVR) show a composition bias toward polar residues. Residues 1–56 (MRMATPSSAPSVRNTEKRKNKKASSKASVSFGAPSPLSSESEDEINYMTPPEQEAQ) are disordered. The tract at residues 1–116 (MRMATPSSAP…FRRYPHLRPK (116 aa)) is interaction with host MAP1LC3A/LC3. Residues 117–341 (EDRPDAPSHA…ISIFGEWQAE (225 aa)) are interaction with NTPase. Residues 244–341 (SPVQDWNVDP…ISIFGEWQAE (98 aa)) form an interaction with NS4 region. Host ER membrane association stretches follow at residues 261–292 (KLRM…KPLN) and 302–341 (WTFS…WQAE). Residues 342–518 (GPFDLALDVV…GKTCFCQNLA (177 aa)) form an interaction with NS1-2, NS4 and homooligomerization region. The region spanning 476–641 (RISMARAAFE…DDARARAPGD (166 aa)) is the SF3 helicase domain. Residue 504–511 (GRPGIGKT) coordinates ATP. Positions 595 to 700 (VIIITTNQQT…AVALVHERHD (106 aa)) are important for mitochondrion targeting. The tract at residues 893–898 (DEEYDE) is acidic. The residue at position 896 (Y896) is an O-(5'-phospho-RNA)-tyrosine. The tract at residues 978 to 994 (WADDDRQVDYGEKINFE) is interaction with host EIF4G. The region spanning 995–1172 (APVSIWSRVV…AATHGEPTLE (178 aa)) is the Peptidase C37 domain. Residues H1024, D1048, and C1133 each act as for 3CLpro activity in the active site. In terms of domain architecture, RdRp catalytic spans 1416–1537 (RYHMDADYTR…STNLELDMVK (122 aa)). Mg(2+) is bound by residues D1420 and D1422. A disulfide bridge links C1482 with C1484. 3 residues coordinate Mg(2+): D1524, E1525, and S1569.

In terms of assembly, homodimer. Interacts with NTPase; this interaction increases the proapoptotic activity of the NTPase and is crucial for the formation of the viral replication complex. Interacts with NS4; this interaction is crucial for the formation of the viral replication complex. Interacts (via N-terminus) with host VAPA. Interacts with host VAPB. Monomer. As to quaternary structure, homooligomer. Interacts with NS1-2; this interaction increases the proapoptotic activity of the NTPase and is crucial for the formation of the viral replication complex. Interacts with NS4; this interaction increases the proapoptotic activity of the NTPase. Interacts with host G3BP1; this interaction leads to the redistribution of G3BP1 and its cellular partners to the viral replication complexes, thereby preventing the assembly of stress granules. In terms of assembly, homodimer. Monomer; in solution. Interacts with NTPase; this interaction increases the proapoptotic activity of the NTPase. Interacts with NS1-2; this interaction is crucial for the formation of the viral replication complex. As to quaternary structure, monomer. Interacts with the RNA-directed RNA polymerase; this interaction induces the multimerization of the RdRp and enhances its activity. Interacts with host IEF4E; this interaction plays a role in translation of viral proteins. Interacts (via C-terminus) with host IEF4G1 (via central domain); this interaction plays a role in translation of viral proteins. In terms of assembly, homohexamer; also forms fibrous hexameric oligomer. Interacts with the viral genome-linked protein; this interaction induces the multimerization of the RdRp and enhances its activity. Requires Mg(2+) as cofactor. The cofactor is Mn(2+). Post-translationally, specific enzymatic cleavages in vivo yield mature proteins. 3CLpro is first autocatalytically cleaved, then processes the whole polyprotein. In terms of processing, cleaved by host CASP3/caspase 3 at 18-22 h.p.i. The cleavage allows NS1 secretion, which is essential for intestinal infection and resistance to IFN-lambda. VPg is uridylylated by the polymerase and is covalently attached to the 5'-end of the polyadenylated genomic and subgenomic RNAs. This uridylylated form acts as a nucleotide-peptide primer for the polymerase.

Its subcellular location is the host endoplasmic reticulum membrane. The protein resides in the secreted. It localises to the host endosome membrane. It is found in the host mitochondrion. The protein localises to the host cytoplasm. Its subcellular location is the host perinuclear region. The catalysed reaction is a ribonucleoside 5'-triphosphate + H2O = a ribonucleoside 5'-diphosphate + phosphate + H(+). The enzyme catalyses Endopeptidase with a preference for cleavage when the P1 position is occupied by Glu-|-Xaa and the P1' position is occupied by Gly-|-Yaa.. It carries out the reaction RNA(n) + a ribonucleoside 5'-triphosphate = RNA(n+1) + diphosphate. With respect to regulation, inhibited by Suramin, Suramin-related compounds and NF023. Inhibited by PPNDS. Its function is as follows. Induces the proliferation of the host smooth ER membranes forming long tubular structures. These remodeled membranes probably form the viral factories that contain the replication complex. May play a role in viral replication by interacting with host VAPA, a vesicle-associated membrane protein that plays a role in SNARE-mediated vesicle fusion. This interaction may target replication complex to intracellular membranes. Promotes intestinal tropism and persistent fecal shedding in strain CR6. This function requires Glu-94 and is present in persistant strains. In terms of biological role, displays NTPase activity, but probably no helicase activity. Displays RNA chaperone-like activity and destabilizes dsRNA. Induces the formation of convoluted membranes derived from the host ER. These remodeled membranes probably form the viral factories that contain the replication complex. Initiates host cell death by targeting the mitochondrial outer membrane, leading to the permeabilization of mitochondria, programmed host cell death and viral egress. Externalization of host cardiolipin seems to be involved in the process. Probably plays a role in preventing the assembly of host stress granules. Functionally, probable key protein responsible for the formation of membrane alterations by the virus. Induces the formation of convoluted membranes derived from the host ER. These remodeled membranes probably form the viral factories that contain the replication complex. May play a role in targeting replication complex to intracellular membranes. Its function is as follows. Viral genome-linked protein is covalently linked to the 5'-end of the positive-strand, negative-strand genomic RNAs and subgenomic RNA. Acts as a genome-linked replication primer. May recruit ribosome to viral RNA thereby promoting viral proteins translation. Interacts with host translation initiation complex to allow the translation of viral proteins. Induces the formation of aggregates of RNA-directed RNA polymerase in the presence of RNA. Through its interaction with the viral RNA-directed RNA polymerase, plays a crucial role in enhancing the polymerase activity. Processes the polyprotein. 3CLpro-RdRp is first released by autocleavage, then all other proteins are cleaved. May cleave host polyadenylate-binding protein thereby inhibiting cellular translation. Does not cleave host G3BP1. In terms of biological role, replicates genomic and antigenomic RNA by recognizing replications specific signals. Also transcribes a subgenomic mRNA by initiating RNA synthesis internally on antigenomic RNA. This sgRNA codes for structural proteins. Catalyzes the covalent attachment VPg with viral RNAs. The polypeptide is Genome polyprotein (Norovirus (isolate Mouse/NoV/United States/MNV1/2002/GV) (MNV-1)).